Reading from the N-terminus, the 319-residue chain is Ribosomal protein uL3 glutamine methyltransferase (319 aa).

This sequence belongs to the protein N5-glutamine methyltransferase family. PrmB subfamily.

It catalyses the reaction L-glutaminyl-[ribosomal protein uL3] + S-adenosyl-L-methionine = N(5)-methyl-L-glutaminyl-[ribosomal protein uL3] + S-adenosyl-L-homocysteine + H(+). Functionally, methylates large ribosomal subunit protein uL3 on a specific glutamine residue. The protein is Ribosomal protein uL3 glutamine methyltransferase of Bradyrhizobium diazoefficiens (strain JCM 10833 / BCRC 13528 / IAM 13628 / NBRC 14792 / USDA 110).